A 219-amino-acid polypeptide reads, in one-letter code: Transmembrane protein 17A (219 aa).

Residues asparagine 18 and asparagine 27 are each glycosylated (N-linked (GlcNAc...) asparagine). 4 consecutive transmembrane segments (helical) span residues 56 to 76 (MMLYFNMFFFPFWWISELLML), 83 to 103 (LPVYYQCLLVTGMVLISIFEV), 121 to 141 (LAGFWLISFLFQLPILLFFIT), and 153 to 173 (AVHSLYLAFLLGELMASFLAL).

It belongs to the TMEM17 family. As to quaternary structure, part of the tectonic-like complex (also named B9 complex).

Its subcellular location is the cell projection. The protein resides in the cilium membrane. Its function is as follows. Transmembrane component of the tectonic-like complex, a complex localized at the transition zone of primary cilia and acting as a barrier that prevents diffusion of transmembrane proteins between the cilia and plasma membranes. Required for ciliogenesis and sonic hedgehog/SHH signaling. The sequence is that of Transmembrane protein 17A (tmem17a) from Danio rerio (Zebrafish).